The chain runs to 1938 residues: MSRWLWPWSNCVKERVCRYLLHHYLGHFFQEHLSLDQLSLDLYKGSVALRDIHLEIWSVNEVLESMESPLELVEGFVGSIEVAVPWAALLTDHCTVRVSGLQLTLQPRRGPAPGAADSQSWASCMTTSLQLAQECLRDGLPEPSEPPQPLEGLEMFAQTIETVLRRIKVTFLDTVVRVEHSPGDGERGVAVEVRVQRLEYCDEAVRDPSQAPPVDVHQPPAFLHKLLQLAGVRLHYEELPAQEEPPEPPLQIGSCSGYMELMVKLKQNEAFPGPKLEVAGQLGSLHLLLTPRQLQQLQELLSAVSLTDHEGLADKLNKSRPLGAEDLWLIEQDLNQQLQAGAVAEPLSPDPLTNPLLNLDNTDLFFSMAGLTSSVASALSELSLSDVDLASSVRSDMASRRLSAQAHPAGKMAPNPLLDTMRPDSLLKMTLGGVTLTLLQTSAPSSGPPDLATHFFTEFDATKDGPFGSRDFHHLRPRFQRACPCSHVRLTGTAVQLSWELRTGSRGRRTTSMEVHFGQLEVLECLWPRGTSEPEYTEILTFPGTLGSQASARPCAHLRHTQILRRVPKSRPRRSVACHCHSELALDLANFQADVELGALDRLAALLRLATVPAEPPAGLLTEPLPAMEQQTVFRLSAPRATLRLRFPIADLRPEPDPWAGQAVRAEQLRLELSEPQFRSELSSGPGPPVPTHLELTCSDLHGIYEDGGKPPVPCLRVSKALDPKSTGRKYFLPQVVVTVNPQSSSTQWEVAPEKGEELELSVESPCELREPEPSPFSSKRTMYETEEMVIPGDPEEMRTFQSRTLALSRCSLEVILPSVHIFLPSKEVYESIYNRINNDLLMWEPADLLPTPDPAAQPSGFPGPSGFWHDSFKMCKSAFKLANCFDLTPDSDSDDEDAHFFSVGASGGPQAAAPEAPSLHLQSTFSTLVTVLKGRITALCETKDEGGKRLEAVHGELVLDMEHGTLFSVSQYCGQPGLGYFCLEAEKATLYHRAAVDDYPLPSHLDLPSFAPPAQLAPTIYPSEEGVTERGASGRKGQGRGPHMLSTAVRIHLDPHKNVKEFLVTLRLHKATLRHYMALPEQSWHSQLLEFLDVLDDPVLGYLPPTVITILHTHLFSCSVDYRPLYLPVRVLITAETFTLSSNIIMDTSTFLLRFILDDSALYLSDKCEVETLDLRRDYVCVLDVDLLELVIKTWKGSTEGKLSQPLFELRCSNNVVHVHSCADSCALLVNLLQYVMSTGDLHPPPRPPSPTEIAGQKLSESPASLPSCPPVETALINQRDLADALLDTERSLRELAQPSGGHLPQASPISVYLFPGERSGAPPPSPPVGGPAGSLGSCSEEKEDEREEEGDGDTLDSDEFCILDAPGLGIPPRDGEPVVTQLHPGPIVVRDGYFSRPIGSTDLLRAPAHFPVPSTRVVLREVSLVWHLYGGRDFGPHPGHRARTGLSGPRSSPSRCSGPNRPQNSWRTQGGSGRQHHVLMEIQLSKVSFQHEVYPAEPATGPAAPSQELEERPLSRQVFIVQELEVRDRLASSQINKFLYLHTSERMPRRAHSNMLTIKALHVAPTTNLGGPECCLRVSLMPLRLNVDQDALFFLKDFFTSLVAGINPVVPGETSAEARPETRAQPSSPLEGQAEGVETTGSQEAPGGGHSPSPPDQQPIYFREFRFTSEVPIWLDYHGKHVTMDQVGTFAGLLIGLAQLNCSELKLKRLCCRHGLLGVDKVLGYALNEWLQDIRKNQLPGLLGGVGPMHSVVQLFQGFRDLLWLPIEQYRKDGRLMRGLQRGAASFGSSTASAALELSNRLVQAIQATAETVYDILSPAAPVSRSLQDKRSARRLRRGQQPADLREGVAKAYDTVREGILDTAQTICDVASRGHEQKGLTGAVGGVIRQLPPTVVKPLILATEATSSLLGGMRNQIVPDAHKDHALKWRSDSAQD.

In terms of domain architecture, Chorein N-terminal spans 14–111 (ERVCRYLLHH…QLTLQPRRGP (98 aa)). Phosphoserine occurs at positions 765, 878, 892, 894, 1266, 1301, and 1309. Positions 1242–1272 (DLHPPPRPPSPTEIAGQKLSESPASLPSCPP) are disordered. Residues 1315–1359 (LFPGERSGAPPPSPPVGGPAGSLGSCSEEKEDEREEEGDGDTLDS) are disordered. A compositionally biased stretch (acidic residues) spans 1343–1359 (EKEDEREEEGDGDTLDS). Residues 1358 to 1404 (DSDEFCILDAPGLGIPPRDGEPVVTQLHPGPIVVRDGYFSRPIGSTD) are WIPI-interacting. Position 1402 is a phosphoserine (Ser1402). Disordered stretches follow at residues 1438–1476 (PHPG…GSGR) and 1614–1657 (GETS…PSPP). Residues 1446–1464 (TGLSGPRSSPSRCSGPNRP) are compositionally biased toward low complexity.

It belongs to the ATG2 family. As to quaternary structure, interacts with ATG9A (via C-terminus). Interacts (via WIPI-interacting region) with WDR45B/WIPI3. Interacts (via WIPI-interacting region) with WDR45/WIPI4. Interacts with TMEM41B. Interacts with VMP1.

Its subcellular location is the preautophagosomal structure membrane. The protein localises to the lipid droplet. It is found in the endoplasmic reticulum membrane. The catalysed reaction is a 1,2-diacyl-sn-glycero-3-phospho-L-serine(in) = a 1,2-diacyl-sn-glycero-3-phospho-L-serine(out). It catalyses the reaction a 1,2-diacyl-sn-glycero-3-phosphoethanolamine(in) = a 1,2-diacyl-sn-glycero-3-phosphoethanolamine(out). Its function is as follows. Lipid transfer protein involved in autophagosome assembly. Tethers the edge of the isolation membrane (IM) to the endoplasmic reticulum (ER) and mediates direct lipid transfer from ER to IM for IM expansion. Binds to the ER exit site (ERES), which is the membrane source for autophagosome formation, and extracts phospholipids from the membrane source and transfers them to ATG9 (ATG9A or ATG9B) to the IM for membrane expansion. Lipid transfer activity is enhanced by WIPI1 and WDR45/WIPI4, which promote ATG2A-association with phosphatidylinositol 3-monophosphate (PI3P)-containing membranes. Also regulates lipid droplets morphology and distribution within the cell. The sequence is that of Autophagy-related protein 2 homolog A from Homo sapiens (Human).